The sequence spans 206 residues: MTALDSSRLLQPRTASVHRRTGETDVQIHLNLDGSGRHEIDTGIPFLDHMLAQLSTHGLIDLQIKAIGDLHIDDHHTNEDVGITLGQALAQALQDRRGIHRFGHFWAPLDEALVQVVLDFSGRPHLSYGLELPTERIGRYETQLVREFYQAVVNHAQLTLHIRQAAGLNAHHIVEASFKAFARALRMAVERDPRRQEGIPSSKGVL.

The segment at 1 to 21 is disordered; it reads MTALDSSRLLQPRTASVHRRT.

It belongs to the imidazoleglycerol-phosphate dehydratase family.

The protein localises to the cytoplasm. It carries out the reaction D-erythro-1-(imidazol-4-yl)glycerol 3-phosphate = 3-(imidazol-4-yl)-2-oxopropyl phosphate + H2O. It functions in the pathway amino-acid biosynthesis; L-histidine biosynthesis; L-histidine from 5-phospho-alpha-D-ribose 1-diphosphate: step 6/9. This chain is Imidazoleglycerol-phosphate dehydratase, found in Synechococcus sp. (strain JA-2-3B'a(2-13)) (Cyanobacteria bacterium Yellowstone B-Prime).